The primary structure comprises 86 residues: ATP synthase subunit c (86 aa).

2 helical membrane-spanning segments follow: residues 8–28 (VLAASAIGAGLAMIAGIGAGI) and 66–86 (GIYALVIALLLLFANPLIGML).

The protein belongs to the ATPase C chain family. F-type ATPases have 2 components, F(1) - the catalytic core - and F(0) - the membrane proton channel. F(1) has five subunits: alpha(3), beta(3), gamma(1), delta(1), epsilon(1). F(0) has three main subunits: a(1), b(2) and c(10-14). The alpha and beta chains form an alternating ring which encloses part of the gamma chain. F(1) is attached to F(0) by a central stalk formed by the gamma and epsilon chains, while a peripheral stalk is formed by the delta and b chains.

It localises to the cell membrane. Functionally, f(1)F(0) ATP synthase produces ATP from ADP in the presence of a proton or sodium gradient. F-type ATPases consist of two structural domains, F(1) containing the extramembraneous catalytic core and F(0) containing the membrane proton channel, linked together by a central stalk and a peripheral stalk. During catalysis, ATP synthesis in the catalytic domain of F(1) is coupled via a rotary mechanism of the central stalk subunits to proton translocation. Key component of the F(0) channel; it plays a direct role in translocation across the membrane. A homomeric c-ring of between 10-14 subunits forms the central stalk rotor element with the F(1) delta and epsilon subunits. The polypeptide is ATP synthase subunit c (Natranaerobius thermophilus (strain ATCC BAA-1301 / DSM 18059 / JW/NM-WN-LF)).